We begin with the raw amino-acid sequence, 249 residues long: Aspartate/glutamate leucyltransferase (249 aa).

This sequence belongs to the R-transferase family. Bpt subfamily.

It localises to the cytoplasm. It carries out the reaction N-terminal L-glutamyl-[protein] + L-leucyl-tRNA(Leu) = N-terminal L-leucyl-L-glutamyl-[protein] + tRNA(Leu) + H(+). The catalysed reaction is N-terminal L-aspartyl-[protein] + L-leucyl-tRNA(Leu) = N-terminal L-leucyl-L-aspartyl-[protein] + tRNA(Leu) + H(+). Its function is as follows. Functions in the N-end rule pathway of protein degradation where it conjugates Leu from its aminoacyl-tRNA to the N-termini of proteins containing an N-terminal aspartate or glutamate. This chain is Aspartate/glutamate leucyltransferase, found in Brucella anthropi (strain ATCC 49188 / DSM 6882 / CCUG 24695 / JCM 21032 / LMG 3331 / NBRC 15819 / NCTC 12168 / Alc 37) (Ochrobactrum anthropi).